We begin with the raw amino-acid sequence, 514 residues long: Bifunctional lysine-specific demethylase and histidyl-hydroxylase NO66 (514 aa).

Residues M1–L53 form a disordered region. The span at E7–V17 shows a compositional bias: acidic residues. Positions G25–K37 are enriched in basic residues. Positions S44 to L53 are enriched in polar residues. The 148-residue stretch at C180–E327 folds into the JmjC domain. Residues H226, D228, and H291 each contribute to the Fe cation site.

It belongs to the ROX family. NO66 subfamily. It depends on Fe(2+) as a cofactor.

It localises to the nucleus. It catalyses the reaction N(6),N(6)-dimethyl-L-lysyl(36)-[histone H3] + 2 2-oxoglutarate + 2 O2 = L-lysyl(36)-[histone H3] + 2 formaldehyde + 2 succinate + 2 CO2. Oxygenase that can act as both a histone lysine demethylase and a ribosomal histidine hydroxylase. Specifically demethylates 'Lys-4' (H3K4me) and 'Lys-36' (H3K36me) of histone H3, thereby playing a central role in histone code. The polypeptide is Bifunctional lysine-specific demethylase and histidyl-hydroxylase NO66 (jcdg) (Dictyostelium discoideum (Social amoeba)).